The primary structure comprises 309 residues: Taste receptor type 2 member 8 (309 aa).

Topologically, residues 1-7 (MFSPADN) are extracellular. Residues 8–28 (IFIILITGEFIIGILGNGYIG) traverse the membrane as a helical segment. Residues 29 to 50 (LVNWIDWIKKKKISTIDCILTN) lie on the Cytoplasmic side of the membrane. The helical transmembrane segment at 51-71 (LVISRICLISVMVVNGIVIVL) threads the bilayer. Residues 72 to 82 (YPDVYTKTKLQ) lie on the Extracellular side of the membrane. Residues 83–103 (IVICTFWTFANYLNMWFTACL) form a helical membrane-spanning segment. At 104–131 (NVFYSLKVANSSHPLFLWLKRKIDMVVR) the chain is on the cytoplasmic side. The chain crosses the membrane as a helical span at residues 132–152 (WILLGCFAISLLVSLIIATVL). The Extracellular portion of the chain corresponds to 153–184 (SHDYRFHAIAKHKRNVTEMFHVSKMPYFEPLT). N-linked (GlcNAc...) asparagine glycosylation is present at N167. The chain crosses the membrane as a helical span at residues 185-205 (LFNLLAIVPFIVSLMSFFLLV). At 206-239 (RSLWRHTKQIKLYATGGRDPSTEAHVRAIKTMTL) the chain is on the cytoplasmic side. The helical transmembrane segment at 240–260 (LIFFFFLYYITSLLVXFSYLI) threads the bilayer. The Extracellular portion of the chain corresponds to 261 to 266 (TNYKLA). The helical transmembrane segment at 267–287 (MAFGEIVAILYPSGHSLILII) threads the bilayer. Residues 288–309 (LNNKLRQASVRMLTCRKIACVT) are Cytoplasmic-facing.

Belongs to the G-protein coupled receptor T2R family.

It localises to the membrane. Functionally, receptor that may play a role in the perception of bitterness and is gustducin-linked. May play a role in sensing the chemical composition of the gastrointestinal content. The activity of this receptor may stimulate alpha gustducin, mediate PLC-beta-2 activation and lead to the gating of TRPM5. The polypeptide is Taste receptor type 2 member 8 (TAS2R8) (Papio hamadryas (Hamadryas baboon)).